A 191-amino-acid polypeptide reads, in one-letter code: Cell division protein SepF (191 aa).

Over residues 153–178 (FPEEVSPSNISSKKTSPYSLETNTTP) the composition is skewed to polar residues. Positions 153 to 191 (FPEEVSPSNISSKKTSPYSLETNTTPEPAWGESKLSAFS) are disordered.

It belongs to the SepF family. In terms of assembly, homodimer. Interacts with FtsZ.

The protein resides in the cytoplasm. Its function is as follows. Cell division protein that is part of the divisome complex and is recruited early to the Z-ring. Probably stimulates Z-ring formation, perhaps through the cross-linking of FtsZ protofilaments. Its function overlaps with FtsA. This chain is Cell division protein SepF, found in Prochlorococcus marinus (strain MIT 9515).